Here is a 325-residue protein sequence, read N- to C-terminus: Heat-inducible transcription repressor HrcA (325 aa).

It belongs to the HrcA family.

Functionally, negative regulator of class I heat shock genes (grpE-dnaK-dnaJ and groELS operons). Prevents heat-shock induction of these operons. This Staphylococcus aureus (strain MRSA252) protein is Heat-inducible transcription repressor HrcA.